The following is a 119-amino-acid chain: Large ribosomal subunit protein bL20 (119 aa).

The protein belongs to the bacterial ribosomal protein bL20 family.

Its function is as follows. Binds directly to 23S ribosomal RNA and is necessary for the in vitro assembly process of the 50S ribosomal subunit. It is not involved in the protein synthesizing functions of that subunit. The protein is Large ribosomal subunit protein bL20 of Saccharophagus degradans (strain 2-40 / ATCC 43961 / DSM 17024).